The primary structure comprises 201 residues: Large ribosomal subunit protein bL25 (201 aa).

This sequence belongs to the bacterial ribosomal protein bL25 family. CTC subfamily. As to quaternary structure, part of the 50S ribosomal subunit; part of the 5S rRNA/L5/L18/L25 subcomplex. Contacts the 5S rRNA. Binds to the 5S rRNA independently of L5 and L18.

In terms of biological role, this is one of the proteins that binds to the 5S RNA in the ribosome where it forms part of the central protuberance. This is Large ribosomal subunit protein bL25 from Thiobacillus denitrificans (strain ATCC 25259 / T1).